Here is a 71-residue protein sequence, read N- to C-terminus: Large ribosomal subunit protein bL31 (71 aa).

The Zn(2+) site is built by C16, C18, C38, and C41.

It belongs to the bacterial ribosomal protein bL31 family. Type A subfamily. As to quaternary structure, part of the 50S ribosomal subunit. The cofactor is Zn(2+).

Functionally, binds the 23S rRNA. This is Large ribosomal subunit protein bL31 from Neisseria gonorrhoeae (strain ATCC 700825 / FA 1090).